Consider the following 356-residue polypeptide: Probable neutral protease 2 homolog ARB_04769 (356 aa).

The signal sequence occupies residues 1-17 (MQFTALLAALGAPLALA). Residues 18–183 (ASIPAAAHNH…DDSTGVIDKR (166 aa)) constitute a propeptide that is removed on maturation. 2 disulfides stabilise this stretch: C191–C262 and C269–C287. An N-linked (GlcNAc...) asparagine glycan is attached at N205. Residue H311 participates in Zn(2+) binding. E312 is a catalytic residue. Zn(2+)-binding residues include H315 and D326.

Belongs to the peptidase M35 family. Zn(2+) serves as cofactor.

The protein localises to the secreted. It catalyses the reaction Preferential cleavage of bonds with hydrophobic residues in P1'. Also 3-Asn-|-Gln-4 and 8-Gly-|-Ser-9 bonds in insulin B chain.. Probable secreted metalloprotease that shows high activities on basic nuclear substrates such as histone and protamine. May be involved in virulence. This is Probable neutral protease 2 homolog ARB_04769 from Arthroderma benhamiae (strain ATCC MYA-4681 / CBS 112371) (Trichophyton mentagrophytes).